The following is a 111-amino-acid chain: Iron-sulfur cluster assembly protein CyaY (111 aa).

Belongs to the frataxin family.

Its function is as follows. Involved in iron-sulfur (Fe-S) cluster assembly. May act as a regulator of Fe-S biogenesis. This Cupriavidus necator (strain ATCC 17699 / DSM 428 / KCTC 22496 / NCIMB 10442 / H16 / Stanier 337) (Ralstonia eutropha) protein is Iron-sulfur cluster assembly protein CyaY.